The primary structure comprises 119 residues: NAD(P)H-quinone oxidoreductase subunit M (119 aa).

This sequence belongs to the complex I NdhM subunit family. In terms of assembly, NDH-1 can be composed of about 15 different subunits; different subcomplexes with different compositions have been identified which probably have different functions.

The protein localises to the cellular thylakoid membrane. The enzyme catalyses a plastoquinone + NADH + (n+1) H(+)(in) = a plastoquinol + NAD(+) + n H(+)(out). The catalysed reaction is a plastoquinone + NADPH + (n+1) H(+)(in) = a plastoquinol + NADP(+) + n H(+)(out). Its function is as follows. NDH-1 shuttles electrons from an unknown electron donor, via FMN and iron-sulfur (Fe-S) centers, to quinones in the respiratory and/or the photosynthetic chain. The immediate electron acceptor for the enzyme in this species is believed to be plastoquinone. Couples the redox reaction to proton translocation, and thus conserves the redox energy in a proton gradient. Cyanobacterial NDH-1 also plays a role in inorganic carbon-concentration. This is NAD(P)H-quinone oxidoreductase subunit M from Crocosphaera subtropica (strain ATCC 51142 / BH68) (Cyanothece sp. (strain ATCC 51142)).